Consider the following 557-residue polypeptide: Dihydroxy-acid dehydratase (557 aa).

Cys50 contacts [2Fe-2S] cluster. Asp82 is a binding site for Mg(2+). Cys123 is a binding site for [2Fe-2S] cluster. 2 residues coordinate Mg(2+): Asp124 and Lys125. At Lys125 the chain carries N6-carboxylysine. Cys195 lines the [2Fe-2S] cluster pocket. Glu447 contributes to the Mg(2+) binding site. Ser473 functions as the Proton acceptor in the catalytic mechanism.

It belongs to the IlvD/Edd family. Homodimer. The cofactor is [2Fe-2S] cluster. Mg(2+) serves as cofactor.

It catalyses the reaction (2R)-2,3-dihydroxy-3-methylbutanoate = 3-methyl-2-oxobutanoate + H2O. The enzyme catalyses (2R,3R)-2,3-dihydroxy-3-methylpentanoate = (S)-3-methyl-2-oxopentanoate + H2O. It functions in the pathway amino-acid biosynthesis; L-isoleucine biosynthesis; L-isoleucine from 2-oxobutanoate: step 3/4. The protein operates within amino-acid biosynthesis; L-valine biosynthesis; L-valine from pyruvate: step 3/4. In terms of biological role, functions in the biosynthesis of branched-chain amino acids. Catalyzes the dehydration of (2R,3R)-2,3-dihydroxy-3-methylpentanoate (2,3-dihydroxy-3-methylvalerate) into 2-oxo-3-methylpentanoate (2-oxo-3-methylvalerate) and of (2R)-2,3-dihydroxy-3-methylbutanoate (2,3-dihydroxyisovalerate) into 2-oxo-3-methylbutanoate (2-oxoisovalerate), the penultimate precursor to L-isoleucine and L-valine, respectively. The protein is Dihydroxy-acid dehydratase of Janthinobacterium sp. (strain Marseille) (Minibacterium massiliensis).